The sequence spans 663 residues: Probable rhamnogalacturonate lyase B (663 aa).

The signal sequence occupies residues 1 to 19 (MRLRTSLGVASACASVASA). 10 N-linked (GlcNAc...) asparagine glycosylation sites follow: N27, N110, N143, N239, N285, N495, N535, N569, N597, and N638.

It belongs to the polysaccharide lyase 4 family.

The protein localises to the secreted. The catalysed reaction is Endotype eliminative cleavage of L-alpha-rhamnopyranosyl-(1-&gt;4)-alpha-D-galactopyranosyluronic acid bonds of rhamnogalacturonan I domains in ramified hairy regions of pectin leaving L-rhamnopyranose at the reducing end and 4-deoxy-4,5-unsaturated D-galactopyranosyluronic acid at the non-reducing end.. Pectinolytic enzymes consist of four classes of enzymes: pectin lyase, polygalacturonase, pectin methylesterase and rhamnogalacturonase. Degrades the rhamnogalacturonan I (RG-I) backbone of pectin. The polypeptide is Probable rhamnogalacturonate lyase B (rglB) (Aspergillus flavus (strain ATCC 200026 / FGSC A1120 / IAM 13836 / NRRL 3357 / JCM 12722 / SRRC 167)).